A 401-amino-acid polypeptide reads, in one-letter code: Ascaroside receptor GPR3 (401 aa).

Topologically, residues 1 to 16 are extracellular; sequence MQPFGDAWSQRHLAGV. The helical transmembrane segment at 17 to 37 threads the bilayer; it reads VLAGSVLSIVGSLYMILGFFF. At 38-47 the chain is on the cytoplasmic side; it reads LRECRSFRHK. Residues 48–68 traverse the membrane as a helical segment; sequence LILGLAVSDLLLALNFFIPSL. Topologically, residues 69–93 are extracellular; that stretch reads SMVTGREISSPWNEGFCSANGFLMQ. Cys85 and Cys159 are oxidised to a cystine. The chain crosses the membrane as a helical span at residues 94-114; the sequence is LFFAQIDVWQISIALITLLML. Over 115–128 the chain is Cytoplasmic; it reads SGPSMVLKWIRENV. A helical transmembrane segment spans residues 129 to 149; the sequence is WAVWLFPWLVSLIAAFFAFGF. The Extracellular portion of the chain corresponds to 150 to 175; the sequence is WDYANVGGFCWLGSRNIRLYFNYIPR. A helical membrane pass occupies residues 176–196; it reads WIIILVCLVIYIAVYRLILHA. Residues 197–294 lie on the Cytoplasmic side of the membrane; sequence RRRANIQKTY…QKQVRKIAIQ (98 aa). The interval 206–259 is disordered; that stretch reads YRGRASDRAPPQPVTTTAPATNPESEKVNPDEISSGNGSSSLDTSRSGSSTGFT. Low complexity predominate over residues 239–257; the sequence is SSGNGSSSLDTSRSGSSTG. Residues 295-315 form a helical membrane-spanning segment; that stretch reads MISYPLAYAVLWAIPTIVMII. Over 316–321 the chain is Extracellular; sequence QVARGG. Residues 322-342 form a helical membrane-spanning segment; sequence EGVSIHVEGLAKMLLVFNGFV. The Cytoplasmic portion of the chain corresponds to 343 to 401; the sequence is DAHVYGFNERTAMGWRQRIRPAAQEDDEEAAGTSGGVHEVVSRPEPTLKNPNVWQQNMV. Residues 362–401 form a disordered region; it reads RPAAQEDDEEAAGTSGGVHEVVSRPEPTLKNPNVWQQNMV. Residues 391-401 are compositionally biased toward polar residues; the sequence is KNPNVWQQNMV.

Belongs to the G-protein coupled receptor 1 family. Interacts with ascaroside receptor GPR2; may form a functional heterodimer. Interacts with guanine nucleotide-binding protein alpha GPA2; to activate adenylate cyclase and positively regulate nematode trap formation.

The protein localises to the cell membrane. Functionally, g protein-coupled receptor that senses nematode ascaroside pheromones and signals via adenylate cyclase to positively regulate trap formation for nematode capture. In Arthrobotrys oligospora (strain ATCC 24927 / CBS 115.81 / DSM 1491) (Nematode-trapping fungus), this protein is Ascaroside receptor GPR3.